Reading from the N-terminus, the 348-residue chain is Hereditary hemochromatosis protein homolog (348 aa).

An N-terminal signal peptide occupies residues 1–22; it reads MGPRARPALFFLILLRTVAAQG. The interval 23–114 is alpha-1; sequence RPPRSHSLRY…IMDNHNHSKE (92 aa). The Extracellular segment spans residues 23-306; sequence RPPRSHSLRY…WEPSLSNTLV (284 aa). N-linked (GlcNAc...) asparagine glycosylation is found at Asn-110, Asn-130, and Asn-234. The alpha-2 stretch occupies residues 115 to 205; it reads SHTLQVILGC…ELGRGVLDQQ (91 aa). Disulfide bonds link Cys-124–Cys-187 and Cys-225–Cys-282. An alpha-3 region spans residues 206–297; sequence VPPLVKVTHH…GLDQPLTATW (92 aa). Positions 207–296 constitute an Ig-like C1-type domain; the sequence is PPLVKVTHHV…PGLDQPLTAT (90 aa). The segment at 298–306 is connecting peptide; sequence EPSLSNTLV. A helical membrane pass occupies residues 307–330; it reads TGVISGIAVCVIIFLIGILFRILR. At 331-348 the chain is on the cytoplasmic side; the sequence is KRQASRGAMGDYVLAECE.

The protein belongs to the MHC class I family. Binds TFR through the extracellular domain in a pH-dependent manner.

It is found in the cell membrane. Its function is as follows. Binds to transferrin receptor (TFR) and reduces its affinity for iron-loaded transferrin. This is Hereditary hemochromatosis protein homolog (HFE) from Dicerorhinus sumatrensis (Sumatran rhinoceros).